The following is a 322-amino-acid chain: Acetyl-coenzyme A carboxylase carboxyl transferase subunit beta (322 aa).

The 270-residue stretch at 24 to 293 (LWIKCPDTGQ…PAVEEIAASD (270 aa)) folds into the CoA carboxyltransferase N-terminal domain.

Belongs to the AccD/PCCB family. Acetyl-CoA carboxylase is a heterohexamer composed of biotin carboxyl carrier protein (AccB), biotin carboxylase (AccC) and two subunits each of ACCase subunit alpha (AccA) and ACCase subunit beta (AccD).

The protein resides in the cytoplasm. The enzyme catalyses N(6)-carboxybiotinyl-L-lysyl-[protein] + acetyl-CoA = N(6)-biotinyl-L-lysyl-[protein] + malonyl-CoA. It participates in lipid metabolism; malonyl-CoA biosynthesis; malonyl-CoA from acetyl-CoA: step 1/1. Functionally, component of the acetyl coenzyme A carboxylase (ACC) complex. Biotin carboxylase (BC) catalyzes the carboxylation of biotin on its carrier protein (BCCP) and then the CO(2) group is transferred by the transcarboxylase to acetyl-CoA to form malonyl-CoA. This chain is Acetyl-coenzyme A carboxylase carboxyl transferase subunit beta, found in Rhodopseudomonas palustris (strain BisB5).